A 311-amino-acid chain; its full sequence is N-acetylmuramic acid 6-phosphate etherase (311 aa).

The region spanning 64-227 (IYQRLIDNGR…SSGVMIKLGK (164 aa)) is the SIS domain. E92 acts as the Proton donor in catalysis. E123 is a catalytic residue.

This sequence belongs to the GCKR-like family. MurNAc-6-P etherase subfamily. Homodimer.

The enzyme catalyses N-acetyl-D-muramate 6-phosphate + H2O = N-acetyl-D-glucosamine 6-phosphate + (R)-lactate. Its pathway is amino-sugar metabolism; N-acetylmuramate degradation. Functionally, specifically catalyzes the cleavage of the D-lactyl ether substituent of MurNAc 6-phosphate, producing GlcNAc 6-phosphate and D-lactate. The chain is N-acetylmuramic acid 6-phosphate etherase from Prochlorococcus marinus (strain SARG / CCMP1375 / SS120).